The sequence spans 382 residues: Pyrimidine monooxygenase RutA (382 aa).

Residues 68 to 69, N134, E143, 159 to 160, and S209 each bind FMN; these read IK and RY.

The protein belongs to the NtaA/SnaA/DszA monooxygenase family. RutA subfamily.

The catalysed reaction is uracil + FMNH2 + NADH + O2 = (Z)-3-ureidoacrylate + FMN + NAD(+) + H2O + H(+). The enzyme catalyses thymine + FMNH2 + NADH + O2 = (Z)-2-methylureidoacrylate + FMN + NAD(+) + H2O + H(+). Catalyzes the pyrimidine ring opening between N-3 and C-4 by an unusual flavin hydroperoxide-catalyzed mechanism, adding oxygen atoms in the process to yield ureidoacrylate peracid, that immediately reacts with FMN forming ureidoacrylate and FMN-N(5)-oxide. The FMN-N(5)-oxide reacts spontaneously with NADH to produce FMN. Requires the flavin reductase RutF to regenerate FMN in vivo. The chain is Pyrimidine monooxygenase RutA from Escherichia coli (strain K12 / MC4100 / BW2952).